We begin with the raw amino-acid sequence, 141 residues long: Galactose-6-phosphate isomerase subunit LacA 1 (141 aa).

This sequence belongs to the LacAB/RpiB family. Heteromultimeric protein consisting of LacA and LacB.

It carries out the reaction aldehydo-D-galactose 6-phosphate = keto-D-tagatose 6-phosphate. It functions in the pathway carbohydrate metabolism; D-galactose 6-phosphate degradation; D-tagatose 6-phosphate from D-galactose 6-phosphate: step 1/1. In Streptococcus agalactiae serotype III (strain NEM316), this protein is Galactose-6-phosphate isomerase subunit LacA 1.